Reading from the N-terminus, the 289-residue chain is Homeobox protein engrailed-2 (289 aa).

2 stretches are compositionally biased toward basic and acidic residues: residues 1–12 (MEEGGRSPREEA) and 60–83 (EFGRRKEAGGTAGEPRRPGAESRR). Disordered regions lie at residues 1–166 (MEEG…GNQP) and 179–206 (SDRPSSGPRSRKPKKKNPNKEDKRPRTA). Gly residues predominate over residues 96–114 (VPGGGGGGGGGSPGRGEGG). A compositionally biased stretch (low complexity) spans 142 to 160 (LSGAELSVSSDSDSSQAGS). Positions 200–259 (DKRPRTAFTAEQLQRLKAEFQTNRYLTEQRRQSLAQELGLNESQIKIWFQNKRAKIKKAT) form a DNA-binding region, homeobox.

It belongs to the engrailed homeobox family.

The protein resides in the nucleus. The sequence is that of Homeobox protein engrailed-2 (EN2) from Gallus gallus (Chicken).